The following is an 854-amino-acid chain: Protein mono-ADP-ribosyltransferase PARP9 (854 aa).

Macro domains lie at 107-296 (LQVF…EFIL) and 306-487 (TPSF…AKRS). The region spanning 628–850 (IQQQKTQDEM…QHPWRGFASG (223 aa)) is the PARP catalytic domain.

The protein belongs to the ARTD/PARP family. In terms of assembly, forms a stable complex with E3 ligase DTX3L; the interaction is required for PARP9 mediated ADP-ribosylation of ubiquitin. Interacts (via PARP catalytic domain) with DTX3L (via N-terminus). Forms a complex with STAT1 and DTX3L independently of IFNB1 or IFNG-mediated STAT1 'Tyr-701' phosphorylation. Forms a complex with STAT1, DTX3L and histone H2B H2BC9/H2BJ; the interaction is likely to induce H2BC9/H2BJ ubiquitination. Interacts (via N-terminus) with STAT1. Interacts with PARP14 in IFNG-stimulated macrophages; the interaction prevents PARP14-mediated STAT1 and STAT6 ADP-riboslylation. Interacts with PARP1 (when poly-ADP-ribosylated). ADP-ribosylated by PARP14. In terms of tissue distribution, expressed in lymphocyte-rich tissues, spleen, lymph nodes, peripheral blood lymphocytes and colonic mucosa. Expressed in macrophages. Also expressed in nonhematopoietic tissues such as heart and skeletal muscle. Isoform 2 is the predominant form. Most abundantly expressed in lymphomas with a brisk host inflammatory response. In diffuse large B-cell lymphomas tumors, expressed specifically by malignant B-cells.

It is found in the cytoplasm. It localises to the cytosol. Its subcellular location is the nucleus. The enzyme catalyses [protein]-C-terminal glycine + NAD(+) = [protein]-C-terminal O-(ADP-D-ribosyl)-glycine + nicotinamide. Its activity is regulated as follows. Binding to poly(ADP-ribose) does not affect its activity. In terms of biological role, ADP-ribosyltransferase which, in association with E3 ligase DTX3L, plays a role in DNA damage repair and in immune responses including interferon-mediated antiviral defenses. Within the complex, enhances DTX3L E3 ligase activity which is further enhanced by PARP9 binding to poly(ADP-ribose). In association with DTX3L and in presence of E1 and E2 enzymes, mediates NAD(+)-dependent mono-ADP-ribosylation of ubiquitin which prevents ubiquitin conjugation to substrates such as histones. During DNA repair, PARP1 recruits PARP9/BAL1-DTX3L complex to DNA damage sites via PARP9 binding to ribosylated PARP1. Subsequent PARP1-dependent PARP9/BAL1-DTX3L-mediated ubiquitination promotes the rapid and specific recruitment of 53BP1/TP53BP1, UIMC1/RAP80, and BRCA1 to DNA damage sites. In response to DNA damage, PARP9-DTX3L complex is required for efficient non-homologous end joining (NHEJ); the complex function is negatively modulated by PARP9 activity. Dispensable for B-cell receptor (BCR) assembly through V(D)J recombination and class switch recombination (CSR). In macrophages, positively regulates pro-inflammatory cytokines production in response to IFNG stimulation by suppressing PARP14-mediated STAT1 ADP-ribosylation and thus promoting STAT1 phosphorylation. Also suppresses PARP14-mediated STAT6 ADP-ribosylation. In Homo sapiens (Human), this protein is Protein mono-ADP-ribosyltransferase PARP9 (PARP9).